The chain runs to 249 residues: tRNA pseudouridine synthase A (249 aa).

Residue aspartate 52 is the Nucleophile of the active site. Position 111 (tyrosine 111) interacts with substrate.

Belongs to the tRNA pseudouridine synthase TruA family. As to quaternary structure, homodimer.

The catalysed reaction is uridine(38/39/40) in tRNA = pseudouridine(38/39/40) in tRNA. Formation of pseudouridine at positions 38, 39 and 40 in the anticodon stem and loop of transfer RNAs. The polypeptide is tRNA pseudouridine synthase A (Brachyspira hyodysenteriae (strain ATCC 49526 / WA1)).